Reading from the N-terminus, the 229-residue chain is Non-structural protein P8 (229 aa).

The segment at 14 to 26 is CCM-I; the sequence is MKHNQDRVEELSL. Positions 94–116 are CCM-III; sequence IKRHVNEQILPKLKSDLSELKKK. The next 2 membrane-spanning stretches (helical) occupy residues 119 to 139 and 162 to 182; these read IIHT…VCTL and SLNP…MVCA. Positions 185-198 are CCM-II; that stretch reads ERALNQQIDMIKKE.

This sequence belongs to the orbivirus NS3 family. As to quaternary structure, forms homooligomers via coiled-coil motif. Interacts with host OPTN; this interaction inhibits innate immune response.

The protein localises to the host cell membrane. It is found in the host Golgi apparatus. Plays a role in the inhibition of host innate immune response. Interacts with host OPTN and thus inhibits the recruitment of TBK1 to the host Golgi apparatus. In turn, downstream partner IRF3 cannot be activated and IFN-beta production is impaired. Its function is as follows. Facilitates viral particle release either by increasing plasma membrane permeability through a viroporin-like activity or by viral budding. The polypeptide is Non-structural protein P8 (Segment-10) (Bluetongue virus 10 (isolate USA) (BTV 10)).